Here is a 408-residue protein sequence, read N- to C-terminus: uncharacterized protein (408 aa).

3 residues coordinate a divalent metal cation: Glu-35, Asp-61, and Asn-96.

It belongs to the metallophosphoesterase superfamily. Requires a divalent metal cation as cofactor.

This is an uncharacterized protein from Bacillus subtilis (strain 168).